A 276-amino-acid polypeptide reads, in one-letter code: CDP-diacylglycerol--serine O-phosphatidyltransferase (276 aa).

Positions 1-21 (MVESDEDFAPQEFPHTDTDVI) are disordered. A phosphoserine mark is found at Ser-4, Ser-34, Ser-42, Ser-46, Ser-47, and Ser-50. The next 4 membrane-spanning stretches (helical) occupy residues 82 to 102 (MADY…VSCL), 163 to 183 (IAFA…FFVL), 210 to 230 (YFEG…AYCV), and 248 to 268 (QILE…GMIS).

This sequence belongs to the CDP-alcohol phosphatidyltransferase class-I family. It depends on Mn(2+) as a cofactor. Mg(2+) serves as cofactor.

Its subcellular location is the microsome membrane. It is found in the endoplasmic reticulum membrane. It localises to the mitochondrion outer membrane. It carries out the reaction a CDP-1,2-diacyl-sn-glycerol + L-serine = a 1,2-diacyl-sn-glycero-3-phospho-L-serine + CMP + H(+). It participates in phospholipid metabolism; phosphatidylethanolamine biosynthesis; phosphatidylethanolamine from CDP-diacylglycerol: step 1/2. In terms of biological role, catalyzes the synthesis of phosphatidylserine (PtdSer). This Saccharomyces cerevisiae (strain ATCC 204508 / S288c) (Baker's yeast) protein is CDP-diacylglycerol--serine O-phosphatidyltransferase (CHO1).